We begin with the raw amino-acid sequence, 268 residues long: Hydroxyacylglutathione hydrolase (268 aa).

The Zn(2+) site is built by His-56, His-58, Asp-60, His-61, His-112, Asp-137, and His-176. A substrate-binding site is contributed by 176–178 (HEY).

Belongs to the metallo-beta-lactamase superfamily. Glyoxalase II family. In terms of assembly, monomer. Requires Zn(2+) as cofactor.

The catalysed reaction is an S-(2-hydroxyacyl)glutathione + H2O = a 2-hydroxy carboxylate + glutathione + H(+). It functions in the pathway secondary metabolite metabolism; methylglyoxal degradation; (R)-lactate from methylglyoxal: step 2/2. Its function is as follows. Thiolesterase that catalyzes the hydrolysis of S-D-lactoyl-glutathione to form glutathione and D-lactic acid. The protein is Hydroxyacylglutathione hydrolase (hagh) of Dictyostelium discoideum (Social amoeba).